The following is a 331-amino-acid chain: uncharacterized protein (331 aa).

Pentapeptide repeat domains follow at residues 50–89 (ENLQ…RLGH), 90–129 (CQMN…NFKG), 140–179 (ANLR…NLQE), 185–224 (ANLR…KLTG), and 230–269 (TNLS…NLTQ).

This is an uncharacterized protein from Synechocystis sp. (strain ATCC 27184 / PCC 6803 / Kazusa).